Reading from the N-terminus, the 405-residue chain is Glycosylated lysosomal membrane protein A (405 aa).

A signal peptide spans 1-25 (MGCTRGWRLLLLLGLVCVGALQGRG). At 26–365 (QEESREVSLQ…YGEPPRDSFS (340 aa)) the chain is on the lumenal side. Residues Asn55, Asn86, Asn125, Asn129, Asn143, Asn153, Asn157, Asn164, Asn169, Asn179, Asn206, Asn222, Asn267, Asn304, and Asn331 are each glycosylated (N-linked (GlcNAc...) asparagine). A helical transmembrane segment spans residues 366–386 (ILVICIMAVALGTPLLLLIVG). The Cytoplasmic portion of the chain corresponds to 387–405 (TLVVTALRHKVYSNYEPIN). The Lysosomal targeting motif signature appears at 401-405 (YEPIN).

Belongs to the GLMP family. In terms of assembly, interacts (via lumenal domain) with lysosomal protein MFSD1; the interaction starts while both proteins are still in the endoplasmic reticulum and is required for stabilization of MFSD1 in lysosomes but has no direct effect on its targeting to lysosomes or transporter activity.

It is found in the lysosome membrane. Its function is as follows. Required to protect lysosomal transporter MFSD1 from lysosomal proteolysis and for MFSD1 lysosomal localization. The protein is Glycosylated lysosomal membrane protein A (glmp-a) of Xenopus laevis (African clawed frog).